The following is a 190-amino-acid chain: Nucleoside triphosphate pyrophosphatase (190 aa).

Asp69 (proton acceptor) is an active-site residue.

This sequence belongs to the Maf family. A divalent metal cation is required as a cofactor.

The protein resides in the cytoplasm. It catalyses the reaction a ribonucleoside 5'-triphosphate + H2O = a ribonucleoside 5'-phosphate + diphosphate + H(+). The enzyme catalyses a 2'-deoxyribonucleoside 5'-triphosphate + H2O = a 2'-deoxyribonucleoside 5'-phosphate + diphosphate + H(+). In terms of biological role, nucleoside triphosphate pyrophosphatase. May have a dual role in cell division arrest and in preventing the incorporation of modified nucleotides into cellular nucleic acids. This is Nucleoside triphosphate pyrophosphatase from Helicobacter pylori (strain HPAG1).